Here is a 151-residue protein sequence, read N- to C-terminus: UPF0208 membrane protein YfbV (151 aa).

2 consecutive transmembrane segments (helical) span residues 46–65 and 69–91; these read YAIRFMPPIAVFTLCWQIAL and LGPAVATALFALSLPMQGLWWLG.

Belongs to the UPF0208 family.

It localises to the cell inner membrane. The protein is UPF0208 membrane protein YfbV of Shigella flexneri serotype 5b (strain 8401).